A 671-amino-acid chain; its full sequence is DNA ligase (671 aa).

NAD(+)-binding positions include 32-36 (DAEYD), 81-82 (SL), and Glu113. Lys115 functions as the N6-AMP-lysine intermediate in the catalytic mechanism. The NAD(+) site is built by Arg136, Glu173, Lys290, and Lys314. 4 residues coordinate Zn(2+): Cys408, Cys411, Cys426, and Cys432. The region spanning 593–671 (EIDSPFAGKT…ETEMLRLLGS (79 aa)) is the BRCT domain.

Belongs to the NAD-dependent DNA ligase family. LigA subfamily. The cofactor is Mg(2+). Requires Mn(2+) as cofactor.

It catalyses the reaction NAD(+) + (deoxyribonucleotide)n-3'-hydroxyl + 5'-phospho-(deoxyribonucleotide)m = (deoxyribonucleotide)n+m + AMP + beta-nicotinamide D-nucleotide.. DNA ligase that catalyzes the formation of phosphodiester linkages between 5'-phosphoryl and 3'-hydroxyl groups in double-stranded DNA using NAD as a coenzyme and as the energy source for the reaction. It is essential for DNA replication and repair of damaged DNA. This chain is DNA ligase, found in Escherichia coli O6:H1 (strain CFT073 / ATCC 700928 / UPEC).